A 136-amino-acid polypeptide reads, in one-letter code: ATP synthase epsilon chain (136 aa).

The disordered stretch occupies residues Gly-112 to Glu-136. Over residues Asp-116–Asn-125 the composition is skewed to basic and acidic residues.

Belongs to the ATPase epsilon chain family. As to quaternary structure, F-type ATPases have 2 components, CF(1) - the catalytic core - and CF(0) - the membrane proton channel. CF(1) has five subunits: alpha(3), beta(3), gamma(1), delta(1), epsilon(1). CF(0) has three main subunits: a, b and c.

It is found in the cellular thylakoid membrane. Functionally, produces ATP from ADP in the presence of a proton gradient across the membrane. In Prochlorococcus marinus (strain SARG / CCMP1375 / SS120), this protein is ATP synthase epsilon chain.